Here is a 277-residue protein sequence, read N- to C-terminus: Undecaprenyl-diphosphatase (277 aa).

Transmembrane regions (helical) follow at residues 11–31, 47–67, 96–116, 123–143, 153–173, 197–217, 227–247, and 254–274; these read WWQALILGMVQGITEFLPISS, AGASFTAVIQLGSLGAVLIYF, VGILVGTVPIVVAGWAIKAIW, LWVIATAAIGLAVLLGWAEQT, LGIWDGIWVGLAQALSLIPGV, SFLLGIPALFLAGVVEFISEF, LGTLSAFVFSYLSIDWLIQFL, and LFIVYRIGFGLFIILGLALGF.

The protein belongs to the UppP family.

The protein resides in the cell inner membrane. It carries out the reaction di-trans,octa-cis-undecaprenyl diphosphate + H2O = di-trans,octa-cis-undecaprenyl phosphate + phosphate + H(+). Functionally, catalyzes the dephosphorylation of undecaprenyl diphosphate (UPP). Confers resistance to bacitracin. The chain is Undecaprenyl-diphosphatase from Synechococcus sp. (strain JA-2-3B'a(2-13)) (Cyanobacteria bacterium Yellowstone B-Prime).